A 202-amino-acid polypeptide reads, in one-letter code: MPIGVPKVPFRSPGEEDAVWVDVYNRLHRERLLFLGQEVDSEISNQLVGLMVYLTIEDDTKDLYLFINSPGGWVIPGIAIYDTMQFVSPDVHTICMGLAASMGSFILVGGEITKRLAFPHARVMIHQPASSFYEAPTGEFILEAEELLKLRETLTRVYVQRTGNPLWVVSEDMERDVFMSATEAQAHGIVDLVAIENTGDSA.

The active-site Nucleophile is the Ser101. Residue His126 is part of the active site.

This sequence belongs to the peptidase S14 family. In terms of assembly, component of the chloroplastic Clp protease core complex.

The protein localises to the plastid. The protein resides in the chloroplast stroma. It carries out the reaction Hydrolysis of proteins to small peptides in the presence of ATP and magnesium. alpha-casein is the usual test substrate. In the absence of ATP, only oligopeptides shorter than five residues are hydrolyzed (such as succinyl-Leu-Tyr-|-NHMec, and Leu-Tyr-Leu-|-Tyr-Trp, in which cleavage of the -Tyr-|-Leu- and -Tyr-|-Trp bonds also occurs).. Its function is as follows. Cleaves peptides in various proteins in a process that requires ATP hydrolysis. Has a chymotrypsin-like activity. Plays a major role in the degradation of misfolded proteins. This is ATP-dependent Clp protease proteolytic subunit from Calycanthus floridus var. glaucus (Eastern sweetshrub).